Reading from the N-terminus, the 146-residue chain is NADH-quinone oxidoreductase subunit A (146 aa).

The next 3 helical transmembrane spans lie at 14–34 (FAVF…GAFF), 66–86 (FYLV…LYAW), and 96–116 (VGFI…VYLV).

Belongs to the complex I subunit 3 family. NDH-1 is composed of 13 different subunits. Subunits NuoA, H, J, K, L, M, N constitute the membrane sector of the complex.

It is found in the cell inner membrane. The enzyme catalyses a quinone + NADH + 5 H(+)(in) = a quinol + NAD(+) + 4 H(+)(out). Its function is as follows. NDH-1 shuttles electrons from NADH, via FMN and iron-sulfur (Fe-S) centers, to quinones in the respiratory chain. The immediate electron acceptor for the enzyme in this species is believed to be ubiquinone. Couples the redox reaction to proton translocation (for every two electrons transferred, four hydrogen ions are translocated across the cytoplasmic membrane), and thus conserves the redox energy in a proton gradient. The sequence is that of NADH-quinone oxidoreductase subunit A from Serratia proteamaculans (strain 568).